Consider the following 214-residue polypeptide: Large ribosomal subunit protein uL3 (214 aa).

The segment at 134–161 is disordered; sequence THGNSLSHRAPGSIGQCQTPGRVMKGKK. Q151 carries the N5-methylglutamine modification.

This sequence belongs to the universal ribosomal protein uL3 family. Part of the 50S ribosomal subunit. Forms a cluster with proteins L14 and L19. Methylated by PrmB.

Functionally, one of the primary rRNA binding proteins, it binds directly near the 3'-end of the 23S rRNA, where it nucleates assembly of the 50S subunit. This Teredinibacter turnerae (strain ATCC 39867 / T7901) protein is Large ribosomal subunit protein uL3.